A 476-amino-acid chain; its full sequence is Bifunctional protein HldE (476 aa).

The ribokinase stretch occupies residues 1–319 (MKVSLPAFEK…EALALHHGES (319 aa)). 195–198 (NMSE) is a binding site for ATP. Residue aspartate 264 is part of the active site. A cytidylyltransferase region spans residues 345-476 (MTNGCFDILH…AIIQNIMANQ (132 aa)).

This sequence in the N-terminal section; belongs to the carbohydrate kinase PfkB family. It in the C-terminal section; belongs to the cytidylyltransferase family. Homodimer.

The enzyme catalyses D-glycero-beta-D-manno-heptose 7-phosphate + ATP = D-glycero-beta-D-manno-heptose 1,7-bisphosphate + ADP + H(+). It catalyses the reaction D-glycero-beta-D-manno-heptose 1-phosphate + ATP + H(+) = ADP-D-glycero-beta-D-manno-heptose + diphosphate. It participates in nucleotide-sugar biosynthesis; ADP-L-glycero-beta-D-manno-heptose biosynthesis; ADP-L-glycero-beta-D-manno-heptose from D-glycero-beta-D-manno-heptose 7-phosphate: step 1/4. It functions in the pathway nucleotide-sugar biosynthesis; ADP-L-glycero-beta-D-manno-heptose biosynthesis; ADP-L-glycero-beta-D-manno-heptose from D-glycero-beta-D-manno-heptose 7-phosphate: step 3/4. Functionally, catalyzes the phosphorylation of D-glycero-D-manno-heptose 7-phosphate at the C-1 position to selectively form D-glycero-beta-D-manno-heptose-1,7-bisphosphate. Its function is as follows. Catalyzes the ADP transfer from ATP to D-glycero-beta-D-manno-heptose 1-phosphate, yielding ADP-D-glycero-beta-D-manno-heptose. The sequence is that of Bifunctional protein HldE from Shewanella sp. (strain W3-18-1).